The following is a 179-amino-acid chain: ATP synthase subunit delta (179 aa).

It belongs to the ATPase delta chain family. F-type ATPases have 2 components, F(1) - the catalytic core - and F(0) - the membrane proton channel. F(1) has five subunits: alpha(3), beta(3), gamma(1), delta(1), epsilon(1). F(0) has three main subunits: a(1), b(2) and c(10-14). The alpha and beta chains form an alternating ring which encloses part of the gamma chain. F(1) is attached to F(0) by a central stalk formed by the gamma and epsilon chains, while a peripheral stalk is formed by the delta and b chains.

It localises to the cell inner membrane. F(1)F(0) ATP synthase produces ATP from ADP in the presence of a proton or sodium gradient. F-type ATPases consist of two structural domains, F(1) containing the extramembraneous catalytic core and F(0) containing the membrane proton channel, linked together by a central stalk and a peripheral stalk. During catalysis, ATP synthesis in the catalytic domain of F(1) is coupled via a rotary mechanism of the central stalk subunits to proton translocation. In terms of biological role, this protein is part of the stalk that links CF(0) to CF(1). It either transmits conformational changes from CF(0) to CF(1) or is implicated in proton conduction. The protein is ATP synthase subunit delta of Chlorobium chlorochromatii (strain CaD3).